Here is a 545-residue protein sequence, read N- to C-terminus: Phospholipase B-like 1 (545 aa).

The signal sequence occupies residues methionine 1–alanine 35. An N-linked (GlcNAc...) (high mannose) asparagine; alternate glycan is attached at asparagine 68. The N-linked (GlcNAc...) (hybrid) asparagine; alternate glycan is linked to asparagine 68. Positions leucine 206–histidine 224 are cleaved as a propeptide — removed in mature form. N-linked (GlcNAc...) (high mannose) asparagine; alternate glycans are attached at residues asparagine 305, asparagine 363, and asparagine 408. Residues asparagine 305, asparagine 363, and asparagine 408 are each glycosylated (N-linked (GlcNAc...) (hybrid) asparagine; alternate). 2 cysteine pairs are disulfide-bonded: cysteine 467–cysteine 472 and cysteine 471–cysteine 486. Asparagine 523 is a glycosylation site (N-linked (GlcNAc...) (high mannose) asparagine; alternate). N-linked (GlcNAc...) (hybrid) asparagine; alternate glycosylation is present at asparagine 523.

Belongs to the phospholipase B-like family. As to quaternary structure, may form a homodimer, each monomer is composed of a chain A and a chain B. In terms of processing, the maturation cleavages that produces chains A and B are required to open the putative substrate binding pocket. Both chains A and B remain associated in the mature protein.

It is found in the lysosome. Its function is as follows. Exhibits a weak phospholipase activity, acting on various phospholipids, including phosphatidylcholine, phosphatidylinositol, phosphatidylethanolamine and lysophospholipids. However, in view of the small size of the putative binding pocket, it has been proposed that it may act rather as an amidase or a peptidase. The polypeptide is Phospholipase B-like 1 (PLBD1) (Bos taurus (Bovine)).